The primary structure comprises 130 residues: Histone H2A type 2-B (130 aa).

Residues 1–22 (MSGRGKQGGKARAKAKSRSSRA) are disordered. S2 is subject to N-acetylserine. S2 is modified (phosphoserine; by RPS6KA5). R4 bears the Citrulline; alternate mark. R4 is subject to Symmetric dimethylarginine; by PRMT5; alternate. K6 bears the N6-(2-hydroxyisobutyryl)lysine mark. Positions 7 to 19 (QGGKARAKAKSRS) are enriched in basic residues. K10 bears the N6-(2-hydroxyisobutyryl)lysine; alternate mark. An N6-(beta-hydroxybutyryl)lysine; alternate mark is found at K10 and K14. At K10 the chain carries N6-lactoyllysine; alternate. Residue K10 is modified to N6-succinyllysine; alternate. K14 participates in a covalent cross-link: Glycyl lysine isopeptide (Lys-Gly) (interchain with G-Cter in ubiquitin); alternate. K16 participates in a covalent cross-link: Glycyl lysine isopeptide (Lys-Gly) (interchain with G-Cter in ubiquitin). N6-(2-hydroxyisobutyryl)lysine; alternate is present on K37. Position 37 is an N6-(beta-hydroxybutyryl)lysine; alternate (K37). Position 37 is an N6-crotonyllysine; alternate (K37). An N6-(2-hydroxyisobutyryl)lysine mark is found at K75 and K76. K96 carries the post-translational modification N6-(2-hydroxyisobutyryl)lysine; alternate. Residue K96 is modified to N6-(beta-hydroxybutyryl)lysine; alternate. The residue at position 96 (K96) is an N6-succinyllysine; alternate. K96 is modified (N6-glutaryllysine; alternate). N5-methylglutamine is present on Q105. At K119 the chain carries N6-(2-hydroxyisobutyryl)lysine; alternate. The residue at position 119 (K119) is an N6-(beta-hydroxybutyryl)lysine; alternate. Residues K119 and K120 each carry the N6-crotonyllysine; alternate modification. Residues K119 and K120 each carry the N6-glutaryllysine; alternate modification. A Glycyl lysine isopeptide (Lys-Gly) (interchain with G-Cter in ubiquitin); alternate cross-link involves residue K120. T121 carries the post-translational modification Phosphothreonine; by DCAF1.

It belongs to the histone H2A family. The nucleosome is a histone octamer containing two molecules each of H2A, H2B, H3 and H4 assembled in one H3-H4 heterotetramer and two H2A-H2B heterodimers. The octamer wraps approximately 147 bp of DNA. Post-translationally, deiminated on Arg-4 in granulocytes upon calcium entry. In terms of processing, monoubiquitination of Lys-120 (H2AK119Ub) by RING1, TRIM37 and RNF2/RING2 complex gives a specific tag for epigenetic transcriptional repression and participates in X chromosome inactivation of female mammals. It is involved in the initiation of both imprinted and random X inactivation. Ubiquitinated H2A is enriched in inactive X chromosome chromatin. Ubiquitination of H2A functions downstream of methylation of 'Lys-27' of histone H3 (H3K27me). H2AK119Ub by RNF2/RING2 can also be induced by ultraviolet and may be involved in DNA repair. Monoubiquitination of Lys-120 (H2AK119Ub) by TRIM37 may promote transformation of cells in a number of breast cancers. Following DNA double-strand breaks (DSBs), it is ubiquitinated through 'Lys-63' linkage of ubiquitin moieties by the E2 ligase UBE2N and the E3 ligases RNF8 and RNF168, leading to the recruitment of repair proteins to sites of DNA damage. Ubiquitination at Lys-14 and Lys-16 (H2AK13Ub and H2AK15Ub, respectively) in response to DNA damage is initiated by RNF168 that mediates monoubiquitination at these 2 sites, and 'Lys-63'-linked ubiquitin are then conjugated to monoubiquitin; RNF8 is able to extend 'Lys-63'-linked ubiquitin chains in vitro. Deubiquitinated by USP51 at Lys-14 and Lys-16 (H2AK13Ub and H2AK15Ub, respectively) after damaged DNA is repaired. H2AK119Ub and ionizing radiation-induced 'Lys-63'-linked ubiquitination (H2AK13Ub and H2AK15Ub) are distinct events. Phosphorylation on Ser-2 (H2AS1ph) is enhanced during mitosis. Phosphorylation on Ser-2 by RPS6KA5/MSK1 directly represses transcription. Acetylation of H3 inhibits Ser-2 phosphorylation by RPS6KA5/MSK1. Phosphorylation at Thr-121 (H2AT120ph) by DCAF1 is present in the regulatory region of many tumor suppresor genes and down-regulates their transcription. Post-translationally, symmetric dimethylation on Arg-4 by the PRDM1/PRMT5 complex may play a crucial role in the germ-cell lineage. In terms of processing, glutamine methylation at Gln-105 (H2AQ104me) by FBL is specifically dedicated to polymerase I. It is present at 35S ribosomal DNA locus and impairs binding of the FACT complex. Crotonylation (Kcr) is specifically present in male germ cells and marks testis-specific genes in post-meiotic cells, including X-linked genes that escape sex chromosome inactivation in haploid cells. Crotonylation marks active promoters and enhancers and confers resistance to transcriptional repressors. It is also associated with post-meiotically activated genes on autosomes. Post-translationally, lactylated in macrophages by EP300/P300 by using lactoyl-CoA directly derived from endogenous or exogenous lactate, leading to stimulates gene transcription.

The protein resides in the nucleus. It is found in the chromosome. Its function is as follows. Core component of nucleosome. Nucleosomes wrap and compact DNA into chromatin, limiting DNA accessibility to the cellular machineries which require DNA as a template. Histones thereby play a central role in transcription regulation, DNA repair, DNA replication and chromosomal stability. DNA accessibility is regulated via a complex set of post-translational modifications of histones, also called histone code, and nucleosome remodeling. In Homo sapiens (Human), this protein is Histone H2A type 2-B.